Here is a 157-residue protein sequence, read N- to C-terminus: Large ribosomal subunit protein uL3 (157 aa).

A disordered region spans residues 57–98 (GKGFAGSIKRHNQSRGPESHGSRYHRRPGSMGPIKGKLKGKK).

The protein belongs to the universal ribosomal protein uL3 family. In terms of assembly, part of the 50S ribosomal subunit. Forms a cluster with proteins L14 and L19.

One of the primary rRNA binding proteins, it binds directly near the 3'-end of the 23S rRNA, where it nucleates assembly of the 50S subunit. The protein is Large ribosomal subunit protein uL3 (rplC) of Onion yellows phytoplasma (strain OY-M).